Here is a 299-residue protein sequence, read N- to C-terminus: Oxygen-dependent coproporphyrinogen-III oxidase (299 aa).

Serine 92 contacts substrate. Mn(2+) contacts are provided by histidine 96 and histidine 106. Histidine 106 (proton donor) is an active-site residue. Position 108–110 (108–110) interacts with substrate; the sequence is NVR. Residues histidine 145 and histidine 175 each contribute to the Mn(2+) site. An important for dimerization region spans residues 240-275; sequence YVEFNLVWDRGTLFGLQTGGRTESILMSMPPLVRWE. A substrate-binding site is contributed by 258–260; the sequence is GGR.

It belongs to the aerobic coproporphyrinogen-III oxidase family. Homodimer. The cofactor is Mn(2+).

It is found in the cytoplasm. The enzyme catalyses coproporphyrinogen III + O2 + 2 H(+) = protoporphyrinogen IX + 2 CO2 + 2 H2O. Its pathway is porphyrin-containing compound metabolism; protoporphyrin-IX biosynthesis; protoporphyrinogen-IX from coproporphyrinogen-III (O2 route): step 1/1. Functionally, involved in the heme biosynthesis. Catalyzes the aerobic oxidative decarboxylation of propionate groups of rings A and B of coproporphyrinogen-III to yield the vinyl groups in protoporphyrinogen-IX. This Escherichia coli O17:K52:H18 (strain UMN026 / ExPEC) protein is Oxygen-dependent coproporphyrinogen-III oxidase.